A 340-amino-acid polypeptide reads, in one-letter code: MDGPQPPALWGSLENRVSELSQKLQGEYFRYKGIPFPVGMYTPESLSLAENTSNVRDDDIFIVTYPKSGTNWMIEIICLILKDGDPSWIRSEPIWQRAPWCETTISAFSLPERPSPRLMCSHLPIELFTKAAFSSKAKVIYLGRNPRDVVVSLYYYSKIAVQLKDPGTPEQFLQNFLKGEVQFGSWFDHIKGWIRMRGRENFLFITYEELQQDLRGSVQLICEFLGRPLGEEALSSVVAHSAFAAMKANNMSNYTLLPASLLDHRQGAFLRKGISGDWKNHFTVAQSETFDQVYREQMHGLPSFPWDRSAEDGSPDGETEPSPSPSPGLASDDPNPGSSQ.

67–72 (KSGTNW) provides a ligand contact to 3'-phosphoadenylyl sulfate. Trp95 and Trp100 together coordinate substrate. His122 acts as the Proton acceptor in catalysis. Residues Arg144, Ser152, Tyr207, 241–246 (SAFAAM), and 271–273 (RKG) contribute to the 3'-phosphoadenylyl sulfate site. The disordered stretch occupies residues 301 to 340 (LPSFPWDRSAEDGSPDGETEPSPSPSPGLASDDPNPGSSQ).

Belongs to the sulfotransferase 1 family. As to expression, isoform 1 is expressed in skin and testis. Higher level of isoform 2 expressed in skin and intestine, moderate level in the kidney, low level in liver, stomach and placenta.

It localises to the cytoplasm. The protein localises to the cytosol. The protein resides in the microsome. Its subcellular location is the nucleus. It catalyses the reaction an alcohol + 3'-phosphoadenylyl sulfate = an alkyl sulfate + adenosine 3',5'-bisphosphate + H(+). The enzyme catalyses pregnenolone + 3'-phosphoadenylyl sulfate = pregnenolone sulfate + adenosine 3',5'-bisphosphate + H(+). The catalysed reaction is 3beta-hydroxyandrost-5-en-17-one + 3'-phosphoadenylyl sulfate = dehydroepiandrosterone 3-sulfate + adenosine 3',5'-bisphosphate + H(+). It carries out the reaction cholesterol + 3'-phosphoadenylyl sulfate = cholesterol sulfate + adenosine 3',5'-bisphosphate + H(+). Functionally, sulfotransferase that utilizes 3'-phospho-5'-adenylyl sulfate (PAPS) as sulfonate donor to catalyze the sulfate conjugation. Sulfonation increases the water solubility of most compounds, and therefore their renal excretion, but it can also result in bioactivation to form active metabolites. Sulfonates cholesterol. Catalyzes sulfation of the 3beta-hydroxyl groups of steroids, such as, pregnenolone and dehydroepiandrosterone (DHEA). Conjugates efficiently cholesterol but has a greater affinity for pregnenolone sulfation. Does not show high activity with DHEA. Plays a role in epidermal cholesterol metabolism and in the regulation of epidermal proliferation and differentiation. In terms of biological role, prefers pregnenolone over DHEA as a substrate and does not sulfate cholesterol. This chain is Sulfotransferase 2B1, found in Rattus norvegicus (Rat).